The following is a 190-amino-acid chain: Isopentenyl-diphosphate Delta-isomerase (190 aa).

Mn(2+) contacts are provided by His27 and His34. The Nudix hydrolase domain occupies 32-171 (PLHFAFSSYI…PFVFSPWMVD (140 aa)). Cys69 is a catalytic residue. Cys69 serves as a coordination point for Mg(2+). Mn(2+) is bound at residue His71. Glu89 serves as a coordination point for Mg(2+). Mn(2+) contacts are provided by Glu119 and Glu121. The active site involves Glu121.

The protein belongs to the IPP isomerase type 1 family. Mg(2+) is required as a cofactor. Mn(2+) serves as cofactor.

The protein localises to the cytoplasm. It catalyses the reaction isopentenyl diphosphate = dimethylallyl diphosphate. It participates in isoprenoid biosynthesis; dimethylallyl diphosphate biosynthesis; dimethylallyl diphosphate from isopentenyl diphosphate: step 1/1. Its function is as follows. Catalyzes the 1,3-allylic rearrangement of the homoallylic substrate isopentenyl (IPP) to its highly electrophilic allylic isomer, dimethylallyl diphosphate (DMAPP). This is Isopentenyl-diphosphate Delta-isomerase from Corynebacterium efficiens (strain DSM 44549 / YS-314 / AJ 12310 / JCM 11189 / NBRC 100395).